A 566-amino-acid chain; its full sequence is MNKKIPKAILSDNERLKVASNFLRGTIAQDLQDNITGGFKGDNIQLIRFHGMYQQDDRDLRVERTCQKLEPLINMMLRCRLPGGIITPQQWLGIDSFATKHTLYGSIRLTTRQTFQFHGVLKPNLKNMHKLLHSLGLDSIATAGDMNRNVLCTSNPVESVLHQQVCNYAKMISEHFLPKTRAYAEIWLDGEKTETTEQEPILGANYLPRKFKISIVVPPLNDVDLHANDLNFIAISNLGQLVGFNVLVGGGLAMTHNDKSTYPRTASELGYISVVDTIKIAEAVITTQRDLGDRSNRKHAKTKYTIERVGVEFFKKEVEVRAGIKFKHIRPYSFTERGDRFGWVQGIDNQWHLTLFIENGRIIDDSHRKLKTGMLEIARIHQGDFRITANQNIIIAGVEKKHKATIELLARQYGLINNNITLQRKASMACVAFPTCPLAMAEAERFLPQFVTKVENIMSRHGLGQEKIILRVTGCPNGCGRAMLAEIGLVGKTIGRYNLYLGGDSIGTRIPRIYRENLTEEEILSIINDTTGRWARERQPDESYGDYVVRAGIIRPVINSALDFHN.

Residues C430, C436, C475, and C479 each contribute to the [4Fe-4S] cluster site. A siroheme-binding site is contributed by C479.

The protein belongs to the nitrite and sulfite reductase 4Fe-4S domain family. As to quaternary structure, alpha(8)-beta(8). The alpha component is a flavoprotein, the beta component is a hemoprotein. It depends on siroheme as a cofactor. The cofactor is [4Fe-4S] cluster.

The enzyme catalyses hydrogen sulfide + 3 NADP(+) + 3 H2O = sulfite + 3 NADPH + 4 H(+). It functions in the pathway sulfur metabolism; hydrogen sulfide biosynthesis; hydrogen sulfide from sulfite (NADPH route): step 1/1. Component of the sulfite reductase complex that catalyzes the 6-electron reduction of sulfite to sulfide. This is one of several activities required for the biosynthesis of L-cysteine from sulfate. In Baumannia cicadellinicola subsp. Homalodisca coagulata, this protein is Sulfite reductase [NADPH] hemoprotein beta-component.